The following is a 126-amino-acid chain: MSYRKLGRTSSQRKALLRDLTTSLIVNGSITTTEPRAKEVRKTMDQMITLAKKGDLASRRKAAAFVRNVVADVKEDGDDIKIQSALQNLFEDIAPKYADRNGGYTRILKTMPRRGDGAKMVILELV.

The protein belongs to the bacterial ribosomal protein bL17 family. Part of the 50S ribosomal subunit. Contacts protein L32.

The sequence is that of Large ribosomal subunit protein bL17 from Limosilactobacillus fermentum (strain NBRC 3956 / LMG 18251) (Lactobacillus fermentum).